We begin with the raw amino-acid sequence, 510 residues long: Anaerobic nitric oxide reductase transcription regulator NorR (510 aa).

A Sigma-54 factor interaction domain is found at 188–417 (IIGNSQGMRT…LEHVIKRAAV (230 aa)). ATP contacts are provided by residues 216–223 (GETGVGKE) and 279–288 (ADGGTLFLDE). Positions 486–505 (WAATARQLELDSGNLHRLAK) form a DNA-binding region, H-T-H motif.

It functions in the pathway nitrogen metabolism; nitric oxide reduction. In terms of biological role, required for the expression of anaerobic nitric oxide (NO) reductase, acts as a transcriptional activator for at least the norVW operon. Activation also requires sigma-54. In Vibrio vulnificus (strain YJ016), this protein is Anaerobic nitric oxide reductase transcription regulator NorR.